The following is a 95-amino-acid chain: MKLNREDVLHIARLARLGLEEDEINRLSKELSALLEHFEVLQQVDTTGVEPTSQSTPVKSVLKEDTIKPSYAREDILSNAPRREGDYIRIRAVME.

The protein belongs to the GatC family. In terms of assembly, heterotrimer of A, B and C subunits.

The catalysed reaction is L-glutamyl-tRNA(Gln) + L-glutamine + ATP + H2O = L-glutaminyl-tRNA(Gln) + L-glutamate + ADP + phosphate + H(+). The enzyme catalyses L-aspartyl-tRNA(Asn) + L-glutamine + ATP + H2O = L-asparaginyl-tRNA(Asn) + L-glutamate + ADP + phosphate + 2 H(+). In terms of biological role, allows the formation of correctly charged Asn-tRNA(Asn) or Gln-tRNA(Gln) through the transamidation of misacylated Asp-tRNA(Asn) or Glu-tRNA(Gln) in organisms which lack either or both of asparaginyl-tRNA or glutaminyl-tRNA synthetases. The reaction takes place in the presence of glutamine and ATP through an activated phospho-Asp-tRNA(Asn) or phospho-Glu-tRNA(Gln). The chain is Aspartyl/glutamyl-tRNA(Asn/Gln) amidotransferase subunit C from Dehalococcoides mccartyi (strain ATCC BAA-2100 / JCM 16839 / KCTC 5957 / BAV1).